Here is a 479-residue protein sequence, read N- to C-terminus: Glutamyl-tRNA reductase (479 aa).

Residues 49 to 52 (TCNR), serine 109, 114 to 116 (EQQ), and glutamine 120 each bind substrate. The active-site Nucleophile is the cysteine 50. NADP(+) is bound at residue 191–196 (GAGSMG).

Belongs to the glutamyl-tRNA reductase family. As to quaternary structure, homodimer.

The catalysed reaction is (S)-4-amino-5-oxopentanoate + tRNA(Glu) + NADP(+) = L-glutamyl-tRNA(Glu) + NADPH + H(+). Its pathway is porphyrin-containing compound metabolism; protoporphyrin-IX biosynthesis; 5-aminolevulinate from L-glutamyl-tRNA(Glu): step 1/2. Its function is as follows. Catalyzes the NADPH-dependent reduction of glutamyl-tRNA(Glu) to glutamate 1-semialdehyde (GSA). In Rhodococcus jostii (strain RHA1), this protein is Glutamyl-tRNA reductase.